Consider the following 278-residue polypeptide: MSSKSQLTYTARAQSHPNPLARKLFQVAEEKKSNVTVSADVTTTKELLDLADPSTGLGPYIAVIKTHIDILSDFSQETIDGLNALAQKHNFLIFEDRKFIDIGNTVQKQYHNGTLRISEWAHIINCSILPGEGIVEALAQTAQATDFPYGSERGLLILAEMTSKGSLATGAYTSASVDIARKYPSFVLGFVSTRSLGEVESTEAPASEDFVVFTTGVNLSSKGDKLGQQYQTPQSAVGRGADFIISGRGIYAAADPVEAAKQYQQQGWEAYLARVGAQ.

Substrate contacts are provided by residues Asp-40, 65–67 (KTH), 96–105 (DRKFIDIGNT), Tyr-230, and Arg-248. Lys-98 (proton donor) is an active-site residue.

The protein belongs to the OMP decarboxylase family.

It carries out the reaction orotidine 5'-phosphate + H(+) = UMP + CO2. Its pathway is pyrimidine metabolism; UMP biosynthesis via de novo pathway; UMP from orotate: step 2/2. The protein is Orotidine 5'-phosphate decarboxylase (pyrG) of Penicillium chrysogenum (Penicillium notatum).